The sequence spans 521 residues: BAR/IMD domain-containing adapter protein 2 (521 aa).

The IMD domain maps to 1 to 250 (MSLSRSEEMH…VQLMQQIASS (250 aa)). A coiled-coil region spans residues 132 to 153 (DALDKCQAELKKLRKKSQGSKN). Residues Ser262, Ser324, Ser326, and Ser337 each carry the phosphoserine modification. The interval 299–370 (VMNGVAGPDS…TLPRSSSMAA (72 aa)) is disordered. The segment covering 321-335 (QPKSLSPPQSQSKLS) has biased composition (low complexity). The residue at position 341 (Thr341) is a Phosphothreonine. At Ser347 the chain carries Phosphoserine. Residues 349 to 368 (TPKNSYATTENKTLPRSSSM) are compositionally biased toward polar residues. Thr361 carries the post-translational modification Phosphothreonine. Phosphoserine occurs at positions 367, 385, 396, and 455. The SH3 domain maps to 375 to 438 (NGRMRVKAIF…PFSYTRVLDS (64 aa)). The interval 445-480 (HMSLQQGKSSSTGNLLDKDDLAVPPPDYGTSSRAFP) is disordered. Over residues 447–458 (SLQQGKSSSTGN) the composition is skewed to polar residues.

As to quaternary structure, homodimer. Interacts with CDC42 and RAC1 that have been activated by GTP binding. Interacts with ATN1, ADGRB1, DIAPH1, EPS8, SHANK1, SHANK2, SHANK3, TIAM1, WASF1 and WASF2. Interacts with ENAH after recruitment of CDC42. In terms of processing, phosphorylated on tyrosine residues by INSR in response to insulin treatment.

It localises to the cytoplasm. Its subcellular location is the membrane. The protein resides in the cell projection. The protein localises to the filopodium. It is found in the ruffle. It localises to the cytoskeleton. Functionally, adapter protein that links membrane-bound small G-proteins to cytoplasmic effector proteins. Necessary for CDC42-mediated reorganization of the actin cytoskeleton and for RAC1-mediated membrane ruffling. Involved in the regulation of the actin cytoskeleton by WASF family members and the Arp2/3 complex. Plays a role in neurite growth. Acts syngeristically with ENAH to promote filipodia formation. Plays a role in the reorganization of the actin cytoskeleton in response to bacterial infection. Participates in actin bundling when associated with EPS8, promoting filopodial protrusions. This chain is BAR/IMD domain-containing adapter protein 2 (BAIAP2), found in Cricetulus griseus (Chinese hamster).